Reading from the N-terminus, the 547-residue chain is Calcium-dependent protein kinase 16 (547 aa).

Positions 1–53 are disordered; it reads MGNCCRSPAAAAREDVKTSHFPASTGGGKKKPHQARNGGGGGGGGGGGGWEKK. A lipid anchor (N-myristoyl glycine) is attached at Gly-2. The segment covering 37-49 has biased composition (gly residues); the sequence is NGGGGGGGGGGGG. The 259-residue stretch at 73-331 folds into the Protein kinase domain; the sequence is YALDRELGRG…AKQVLEHTWL (259 aa). Residues 79 to 87 and Lys-102 each bind ATP; that span reads LGRGEFGVT. The Proton acceptor role is filled by Asp-197. The segment at 337 to 367 is autoinhibitory domain; it reads APNVPLGDIVKSRLKQFSRMNRFKRRALRVI. EF-hand domains lie at 374-409, 410-445, 446-481, and 482-517; these read EEVEDIKDMFKVMDTDNDGIVSYEELKSGIAKFGSH, LAESEVQMLIEAVDTNGRGALDYGEFLAVSLHLQRM, ANGEHLRRAFLFFDKDGNGYIEPEELQEALVEDGAT, and DIMEVVKDILQEVDTDKDGKISYEEFVAMMKTGTDW. Residues Asp-387, Asp-389, Asp-391, Glu-398, Asp-423, Asn-425, Glu-434, Asp-459, Asp-461, Asn-463, Tyr-465, Glu-470, Asp-495, Asp-497, Asp-499, Lys-501, and Glu-506 each coordinate Ca(2+).

It belongs to the protein kinase superfamily. Ser/Thr protein kinase family. CDPK subfamily.

The protein resides in the membrane. The enzyme catalyses L-seryl-[protein] + ATP = O-phospho-L-seryl-[protein] + ADP + H(+). It catalyses the reaction L-threonyl-[protein] + ATP = O-phospho-L-threonyl-[protein] + ADP + H(+). With respect to regulation, activated by calcium. Autophosphorylation may play an important role in the regulation of the kinase activity. In terms of biological role, may play a role in signal transduction pathways that involve calcium as a second messenger. The polypeptide is Calcium-dependent protein kinase 16 (Oryza sativa subsp. japonica (Rice)).